Consider the following 727-residue polypeptide: Glucans biosynthesis glucosyltransferase H (727 aa).

Residues 18–45 form a disordered region; it reads SAMPNERPGAMEPQSLTEMPEGFPRRST. The next 7 membrane-spanning stretches (helical) occupy residues 58–78, 90–110, 278–298, 408–428, 460–480, 496–516, and 572–592; these read FFVV…MGAV, LVLL…CSGI, LQQF…GWWV, IMAY…LMLA, LFYI…LLLL, IFSV…MMFI, and LLAW…ISAW.

Belongs to the glycosyltransferase 2 family. OpgH subfamily.

It localises to the cell inner membrane. The protein operates within glycan metabolism; osmoregulated periplasmic glucan (OPG) biosynthesis. In terms of biological role, involved in the biosynthesis of osmoregulated periplasmic glucans (OPGs). This chain is Glucans biosynthesis glucosyltransferase H, found in Shewanella putrefaciens (strain CN-32 / ATCC BAA-453).